Reading from the N-terminus, the 104-residue chain is Large ribosomal subunit protein uL23 (104 aa).

The protein belongs to the universal ribosomal protein uL23 family. As to quaternary structure, part of the 50S ribosomal subunit. Contacts protein L29, and trigger factor when it is bound to the ribosome.

In terms of biological role, one of the early assembly proteins it binds 23S rRNA. One of the proteins that surrounds the polypeptide exit tunnel on the outside of the ribosome. Forms the main docking site for trigger factor binding to the ribosome. This chain is Large ribosomal subunit protein uL23, found in Burkholderia multivorans (strain ATCC 17616 / 249).